A 426-amino-acid polypeptide reads, in one-letter code: ATP-dependent Clp protease ATP-binding subunit ClpX (426 aa).

One can recognise a ClpX-type ZB domain in the interval 1–52 (MNEIKKRCSFCNKEESLDNPIINSGITPDVYICNYCLIVGSEILTGYLNKNP). Zn(2+)-binding residues include cysteine 8, cysteine 11, cysteine 33, and cysteine 36. 129–136 (PTGSGKTL) provides a ligand contact to ATP.

It belongs to the ClpX chaperone family. As to quaternary structure, component of the ClpX-ClpP complex. Forms a hexameric ring that, in the presence of ATP, binds to fourteen ClpP subunits assembled into a disk-like structure with a central cavity, resembling the structure of eukaryotic proteasomes.

Its function is as follows. ATP-dependent specificity component of the Clp protease. It directs the protease to specific substrates. Can perform chaperone functions in the absence of ClpP. The protein is ATP-dependent Clp protease ATP-binding subunit ClpX of Helicobacter hepaticus (strain ATCC 51449 / 3B1).